The primary structure comprises 253 residues: 1-(5-phosphoribosyl)-5-[(5-phosphoribosylamino)methylideneamino] imidazole-4-carboxamide isomerase (253 aa).

Asp-8 acts as the Proton acceptor in catalysis. Catalysis depends on Asp-129, which acts as the Proton donor.

This sequence belongs to the HisA/HisF family.

Its subcellular location is the cytoplasm. The catalysed reaction is 1-(5-phospho-beta-D-ribosyl)-5-[(5-phospho-beta-D-ribosylamino)methylideneamino]imidazole-4-carboxamide = 5-[(5-phospho-1-deoxy-D-ribulos-1-ylimino)methylamino]-1-(5-phospho-beta-D-ribosyl)imidazole-4-carboxamide. The protein operates within amino-acid biosynthesis; L-histidine biosynthesis; L-histidine from 5-phospho-alpha-D-ribose 1-diphosphate: step 4/9. This Microcystis aeruginosa (strain NIES-843 / IAM M-2473) protein is 1-(5-phosphoribosyl)-5-[(5-phosphoribosylamino)methylideneamino] imidazole-4-carboxamide isomerase.